The primary structure comprises 276 residues: Pantothenate synthetase (276 aa).

27–34 (MGALHKGH) is an ATP binding site. H34 serves as the catalytic Proton donor. Q58 is a (R)-pantoate binding site. Q58 contacts beta-alanine. ATP is bound at residue 147–150 (GKKD). Q153 is a binding site for (R)-pantoate. ATP-binding positions include V176 and 184 to 187 (LSSR).

Belongs to the pantothenate synthetase family. As to quaternary structure, homodimer.

Its subcellular location is the cytoplasm. The enzyme catalyses (R)-pantoate + beta-alanine + ATP = (R)-pantothenate + AMP + diphosphate + H(+). It participates in cofactor biosynthesis; (R)-pantothenate biosynthesis; (R)-pantothenate from (R)-pantoate and beta-alanine: step 1/1. Functionally, catalyzes the condensation of pantoate with beta-alanine in an ATP-dependent reaction via a pantoyl-adenylate intermediate. This is Pantothenate synthetase from Helicobacter pylori (strain Shi470).